A 423-amino-acid polypeptide reads, in one-letter code: Adenylosuccinate synthetase (423 aa).

GTP is bound by residues 12–18 (GDEGKGK) and 40–42 (GHT). Aspartate 13 serves as the catalytic Proton acceptor. Residues aspartate 13 and glycine 40 each contribute to the Mg(2+) site. IMP contacts are provided by residues 13 to 16 (DEGK), 38 to 41 (NAGH), threonine 129, arginine 143, glutamine 221, threonine 236, and arginine 300. The active-site Proton donor is the histidine 41. Residue 296 to 302 (SVTGRKR) participates in substrate binding. GTP contacts are provided by residues arginine 302 and 408 to 410 (SVG).

Belongs to the adenylosuccinate synthetase family. As to quaternary structure, homodimer. Mg(2+) is required as a cofactor.

The protein localises to the cytoplasm. It carries out the reaction IMP + L-aspartate + GTP = N(6)-(1,2-dicarboxyethyl)-AMP + GDP + phosphate + 2 H(+). It participates in purine metabolism; AMP biosynthesis via de novo pathway; AMP from IMP: step 1/2. Functionally, plays an important role in the de novo pathway of purine nucleotide biosynthesis. Catalyzes the first committed step in the biosynthesis of AMP from IMP. The chain is Adenylosuccinate synthetase from Bacteroides thetaiotaomicron (strain ATCC 29148 / DSM 2079 / JCM 5827 / CCUG 10774 / NCTC 10582 / VPI-5482 / E50).